An 80-amino-acid polypeptide reads, in one-letter code: Defensin-like protein 16 (80 aa).

The signal sequence occupies residues 1 to 29; sequence MAKFASIITLIFAALVLFAAFDAPAMVEA. Q30 is modified (pyrrolidone carboxylic acid). 4 disulfides stabilise this stretch: C33/C80, C44/C65, C50/C74, and C54/C76.

It belongs to the DEFL family. As to expression, predominantly expressed in leaves.

It is found in the secreted. In terms of biological role, confers broad-spectrum resistance to pathogens. Has antifungal activity in vitro. This chain is Defensin-like protein 16 (PDF1.2A), found in Arabidopsis thaliana (Mouse-ear cress).